The primary structure comprises 324 residues: MRENFKELPMGVRDYLPGEAALRRYLENLFVELVAKEGFQEVITPSFEYYETLRESSETDLIKFVDRTGELLALRGDMTTPIARVVSTKMKHRELPLKIFYAATVFSGNFSGRNKLREFKQLGIEVFGDITSKLESDLIKLMAVYLRKAKVKNLEISLGHVDILTGLIEEYELFNHFSEIKNALNQKDYVALEGIFERAGKSQRVRESLVDFLQQRGGKAILRKAKKMLSHPKAKKALEELEEVTEYLISEGVRELKLDFSLVRDLNYYTGLVFEAYTPYLGYPLGGGGRYDTLLKKFGWDTPAFGFALGLERIVESIANSIDK.

Belongs to the class-II aminoacyl-tRNA synthetase family. HisZ subfamily. In terms of assembly, heteromultimer composed of HisG and HisZ subunits.

Its subcellular location is the cytoplasm. Its pathway is amino-acid biosynthesis; L-histidine biosynthesis; L-histidine from 5-phospho-alpha-D-ribose 1-diphosphate: step 1/9. Its function is as follows. Required for the first step of histidine biosynthesis. May allow the feedback regulation of ATP phosphoribosyltransferase activity by histidine. The polypeptide is ATP phosphoribosyltransferase regulatory subunit (Carboxydothermus hydrogenoformans (strain ATCC BAA-161 / DSM 6008 / Z-2901)).